A 181-amino-acid chain; its full sequence is MKVALASRNPSKVKAVEEALRILNINGTVEAVDPPPGIPPEPMGLEATVNGAVVRARHALSSIKDSTYGIGIEAGVLMLSAFNVNFDVTVAAVIDRKGLITLGLSPAFMIPPAFMRELMTGKELNDVVEKYYGVPNAGKGIGFIGLLSRGLIKRINLNTEAVYMALLPRMPWNKDLYELSD.

Position 65 (Asp65) interacts with Mg(2+).

This sequence belongs to the YjjX NTPase family. In terms of assembly, homodimer. Mg(2+) serves as cofactor. The cofactor is Mn(2+).

The catalysed reaction is XTP + H2O = XDP + phosphate + H(+). It carries out the reaction ITP + H2O = IDP + phosphate + H(+). Phosphatase that hydrolyzes non-canonical purine nucleotides such as XTP and ITP to their respective diphosphate derivatives. Probably excludes non-canonical purines from DNA/RNA precursor pool, thus preventing their incorporation into DNA/RNA and avoiding chromosomal lesions. This Caldivirga maquilingensis (strain ATCC 700844 / DSM 13496 / JCM 10307 / IC-167) protein is Probable inosine/xanthosine triphosphatase.